The chain runs to 995 residues: DExH-box ATP-dependent RNA helicase DExH1 (995 aa).

Disordered regions lie at residues 1–42 and 156–192; these read MPPH…EQRW and KTTQESGSSGASASAFNDQQDRTSTLGLKRPDSASKL. Gly residues predominate over residues 25–37; it reads RGGGGRGGGGGGR. The segment covering 161-170 has biased composition (low complexity); it reads SGSSGASASA. The segment covering 171 to 181 has biased composition (polar residues); the sequence is FNDQQDRTSTL. Positions 238 to 405 constitute a Helicase ATP-binding domain; it reads LNSVSQNQVL…FGNSPTMHIP (168 aa). 251 to 258 is an ATP binding site; sequence GETGCGKT. Residues 352–355 carry the DEIH box motif; it reads DEIH. The segment at 429–450 is disordered; that stretch reads SSDSGNYQGSSRGRRRESESKK. The Helicase C-terminal domain maps to 484 to 663; sequence QIDVDLVEAT…ELCLHIKSLQ (180 aa).

This sequence belongs to the DExH box helicase family.

It catalyses the reaction ATP + H2O = ADP + phosphate + H(+). This is DExH-box ATP-dependent RNA helicase DExH1 from Arabidopsis thaliana (Mouse-ear cress).